A 438-amino-acid polypeptide reads, in one-letter code: MPKIVVVGAVAGGATCASQIRRLDKESDIIIFEKDRDMSFANCALPYVIGEVVEDRKYALAYTPEKFYDRKQITVKTYHEVIAINDERQTVTVLNRKTNEQFEESYDKLILSPGASANSLGFESDITFTLRNLEDTDAIDQFIKANQVDKVLVVGAGYVSLEVLENLYERGLHPTLIHRSDKINKLMDADMNQPILDELDKREIPYRLNEEIDAINGNEITFKSGKVEHYDMIIEGVGTHPNSKFIESSNIKLDRKGFIPVNDKFETNVPNIYAIGDIATSHYRHVDLPASVPLAWGAHRAASIVAEQIAGNDTIEFKGFLGNNIVKFFDYTFASVGVKPNELKQFDYKMVEVTQGAHANYYPGNSPLHLRVYYDTSNRQILRAAAVGKEGADKRIDVLSMAMMNQLTVDELTEFEVAYAPPYSHPKDLINMIGYKAK.

Gly8–Glu33 lines the FAD pocket. 5 residues coordinate substrate: Thr15, Gln19, Arg22, Ser39, and Asn42. Cys43 serves as the catalytic Nucleophile. Cys43 functions as the Redox-active in the catalytic mechanism. Lys71 serves as a coordination point for substrate. An NADP(+)-binding site is contributed by Val151–Asn166. Thr267–Asp277 lines the FAD pocket. His299 is a binding site for substrate. Position 419 (Tyr419) interacts with FAD. Position 427 (Lys427) interacts with substrate.

Belongs to the class-III pyridine nucleotide-disulfide oxidoreductase family. As to quaternary structure, homodimer. FAD is required as a cofactor.

The enzyme catalyses NADP(+) + 2 CoA = CoA-disulfide + NADPH + H(+). Catalyzes specifically the NADPH-dependent reduction of coenzyme A disulfide. This Staphylococcus aureus (strain MSSA476) protein is Coenzyme A disulfide reductase.